Reading from the N-terminus, the 49-residue chain is Large ribosomal subunit protein bL36 (49 aa).

The protein belongs to the bacterial ribosomal protein bL36 family.

This Pseudomonas fluorescens (strain ATCC BAA-477 / NRRL B-23932 / Pf-5) protein is Large ribosomal subunit protein bL36.